The chain runs to 36 residues: Conotoxin Cal6.1h (36 aa).

Positions 1 to 7 (GLGRPSR) are excised as a propeptide. 3 disulfide bridges follow: C9–C25, C16–C29, and C24–C34.

The protein belongs to the conotoxin O1 superfamily. As to expression, expressed by the venom duct.

The protein resides in the secreted. In terms of biological role, probable neurotoxin with unknown target. Possibly targets ion channels. This Californiconus californicus (California cone) protein is Conotoxin Cal6.1h.